A 444-amino-acid chain; its full sequence is Phosphoglucosamine mutase (444 aa).

The active-site Phosphoserine intermediate is S103. 4 residues coordinate Mg(2+): S103, D241, D243, and D245. Phosphoserine is present on S103.

It belongs to the phosphohexose mutase family. The cofactor is Mg(2+). Activated by phosphorylation.

The enzyme catalyses alpha-D-glucosamine 1-phosphate = D-glucosamine 6-phosphate. Catalyzes the conversion of glucosamine-6-phosphate to glucosamine-1-phosphate. This chain is Phosphoglucosamine mutase, found in Deinococcus geothermalis (strain DSM 11300 / CIP 105573 / AG-3a).